Consider the following 477-residue polypeptide: Glycogen synthase (477 aa).

K15 serves as a coordination point for ADP-alpha-D-glucose.

It belongs to the glycosyltransferase 1 family. Bacterial/plant glycogen synthase subfamily.

The catalysed reaction is [(1-&gt;4)-alpha-D-glucosyl](n) + ADP-alpha-D-glucose = [(1-&gt;4)-alpha-D-glucosyl](n+1) + ADP + H(+). Its pathway is glycan biosynthesis; glycogen biosynthesis. Synthesizes alpha-1,4-glucan chains using ADP-glucose. The chain is Glycogen synthase from Streptococcus pneumoniae (strain 70585).